The primary structure comprises 180 residues: Large ribosomal subunit protein uL6 (180 aa).

It belongs to the universal ribosomal protein uL6 family. As to quaternary structure, part of the 50S ribosomal subunit.

This protein binds to the 23S rRNA, and is important in its secondary structure. It is located near the subunit interface in the base of the L7/L12 stalk, and near the tRNA binding site of the peptidyltransferase center. The chain is Large ribosomal subunit protein uL6 from Borrelia turicatae (strain 91E135).